Reading from the N-terminus, the 308-residue chain is Probable D,D-dipeptide transport ATP-binding protein DdpF (308 aa).

The region spanning 8-243 (LRDVHINFPA…PAHPYTRLLL (236 aa)) is the ABC transporter domain. 49–56 (GESGCGKS) contributes to the ATP binding site.

The protein belongs to the ABC transporter superfamily. As to quaternary structure, the complex is composed of two ATP-binding proteins (DdpD and DdpF), two transmembrane proteins (DdpB and DdpC) and a solute-binding protein (DdpA).

It is found in the cell inner membrane. Its function is as follows. Part of the ABC transporter complex DdpABCDF, which is probably involved in D,D-dipeptide transport. Probably responsible for energy coupling to the transport system. This Escherichia coli (strain K12) protein is Probable D,D-dipeptide transport ATP-binding protein DdpF.